The primary structure comprises 200 residues: Probable nicotinate-nucleotide adenylyltransferase (200 aa).

This sequence belongs to the NadD family.

The enzyme catalyses nicotinate beta-D-ribonucleotide + ATP + H(+) = deamido-NAD(+) + diphosphate. Its pathway is cofactor biosynthesis; NAD(+) biosynthesis; deamido-NAD(+) from nicotinate D-ribonucleotide: step 1/1. Its function is as follows. Catalyzes the reversible adenylation of nicotinate mononucleotide (NaMN) to nicotinic acid adenine dinucleotide (NaAD). The polypeptide is Probable nicotinate-nucleotide adenylyltransferase (Clostridium botulinum (strain Alaska E43 / Type E3)).